The sequence spans 453 residues: DNA repair protein RadA (453 aa).

Residues 10 to 27 (CQECGYQSPKYLGRCPNC) form a C4-type zinc finger. 95-102 (GDPGIGKS) is an ATP binding site. A RadA KNRFG motif motif is present at residues 251 to 255 (KNRFG). Positions 350–453 (DAYLKSAGGV…VGQVLKAVFS (104 aa)) are lon-protease-like.

This sequence belongs to the RecA family. RadA subfamily.

Its function is as follows. DNA-dependent ATPase involved in processing of recombination intermediates, plays a role in repairing DNA breaks. Stimulates the branch migration of RecA-mediated strand transfer reactions, allowing the 3' invading strand to extend heteroduplex DNA faster. Binds ssDNA in the presence of ADP but not other nucleotides, has ATPase activity that is stimulated by ssDNA and various branched DNA structures, but inhibited by SSB. Does not have RecA's homology-searching function. The polypeptide is DNA repair protein RadA (Streptococcus pyogenes serotype M3 (strain ATCC BAA-595 / MGAS315)).